The following is a 632-amino-acid chain: MTHEFTESYDVIVIGAGHAGVEASLATSRMGCKTLLATINLDMLAFMPCNPSIGGSAKGIVVREIDALGGEMGKNIDKTYIQMKMLNTGKGPAVRALRAQADKSLYAREMKHTVEKQANLTLRQTMIDDILVEDGRVVGVLTATGQKFAAKAVVVTTGTALRGEIILGELKYSSGPNNSLASVTLADNLKKLGLEIGRFKTGTPPRVKASSINYDQTEIQPGDDKPNHFSFMSKDADYLKDQIPCWLTYTNQTSHDIINQNLYRAPMFSGIVKGVGPRYCPSIEDKIVRFADKERHQLFLEPEGRDTEEVYVQGLSTSLPEDVQKDLIHSIKGLEKAEMMRTGYAIEYDIVLPHQLRATLETKLISGLFTAGQTNGTSGYEEAAGQGLIAGINAALKVQGKPELILKRSDAYIGVMIDDLVTKGTLEPYRLLTSRAEYRLILRHDNADMRLTEIGRDIGLVDDERWKAFEIKKNQFDNELKRLNSIKLKPIKETNDRVQDLGFKPLTDAMTAKEFMRRPEIDYATAVSFVGPAAEDLDAKIIELLETEIKYEGYIRKALDQVAKMKRMEEKRIPTNIDWDAIDSIATEARQKFKKINPETIGQASRISGVNPADISILMIYLEGNGKAHRKY.

FAD-binding positions include 15-20, Ile-127, and Ser-182; that span reads GAGHAG. 276-290 contributes to the NAD(+) binding site; the sequence is GPRYCPSIEDKIVRF. Gln-373 lines the FAD pocket.

It belongs to the MnmG family. Homodimer. Heterotetramer of two MnmE and two MnmG subunits. It depends on FAD as a cofactor.

Its subcellular location is the cytoplasm. In terms of biological role, NAD-binding protein involved in the addition of a carboxymethylaminomethyl (cmnm) group at the wobble position (U34) of certain tRNAs, forming tRNA-cmnm(5)s(2)U34. The protein is tRNA uridine 5-carboxymethylaminomethyl modification enzyme MnmG of Streptococcus pyogenes serotype M1.